Consider the following 450-residue polypeptide: Tubulin alpha-3E chain (450 aa).

The MREC motif signature appears at 1–4 (MREC). Glutamine 11 contacts GTP. Lysine 40 bears the N6-acetyllysine mark. GTP is bound by residues glutamate 71, serine 140, glycine 144, threonine 145, threonine 179, asparagine 206, and asparagine 228. Glutamate 71 lines the Mg(2+) pocket. Glutamate 254 is a catalytic residue. Tyrosine 282 carries the post-translational modification 3'-nitrotyrosine. At serine 439 the chain carries Phosphoserine. At tyrosine 450 the chain carries 3'-nitrotyrosine.

The protein belongs to the tubulin family. Dimer of alpha and beta chains. A typical microtubule is a hollow water-filled tube with an outer diameter of 25 nm and an inner diameter of 15 nM. Alpha-beta heterodimers associate head-to-tail to form protofilaments running lengthwise along the microtubule wall with the beta-tubulin subunit facing the microtubule plus end conferring a structural polarity. Microtubules usually have 13 protofilaments but different protofilament numbers can be found in some organisms and specialized cells. The cofactor is Mg(2+). Post-translationally, some glutamate residues at the C-terminus are polyglutamylated, resulting in polyglutamate chains on the gamma-carboxyl group. Polyglutamylation plays a key role in microtubule severing by spastin (SPAST). SPAST preferentially recognizes and acts on microtubules decorated with short polyglutamate tails: severing activity by SPAST increases as the number of glutamates per tubulin rises from one to eight, but decreases beyond this glutamylation threshold. Glutamylation is also involved in cilia motility. In terms of processing, some glutamate residues at the C-terminus are monoglycylated but not polyglycylated due to the absence of functional TTLL10 in human. Monoglycylation is mainly limited to tubulin incorporated into cilia and flagella axonemes, which is required for their stability and maintenance. Flagella glycylation controls sperm motility. Both polyglutamylation and monoglycylation can coexist on the same protein on adjacent residues, and lowering glycylation levels increases polyglutamylation, and reciprocally. Acetylation of alpha chains at Lys-40 is located inside the microtubule lumen. This modification has been correlated with increased microtubule stability, intracellular transport and ciliary assembly. Post-translationally, methylation of alpha chains at Lys-40 is found in mitotic microtubules and is required for normal mitosis and cytokinesis contributing to genomic stability. In terms of processing, nitration of Tyr-450 is irreversible and interferes with normal dynein intracellular distribution. Undergoes a tyrosination/detyrosination cycle, the cyclic removal and re-addition of a C-terminal tyrosine residue by the enzymes tubulin tyrosine carboxypeptidase (MATCAP1/KIAA0895L, VASH1 or VASH2) and tubulin tyrosine ligase (TTL), respectively. Post-translationally, tyrosination promotes microtubule interaction with CAP-Gly domain-containing proteins such as CLIP1, CLIP2 and DCTN1. Tyrosination regulates the initiation of dynein-dynactin motility via interaction with DCTN1, which brings the dynein-dynactin complex into contact with microtubules. In neurons, tyrosinated tubulins mediate the initiation of retrograde vesicle transport. In terms of processing, detyrosination is involved in metaphase plate congression by guiding chromosomes during mitosis: detyrosination promotes interaction with CENPE, promoting pole-proximal transport of chromosomes toward the equator. Detyrosination increases microtubules-dependent mechanotransduction in dystrophic cardiac and skeletal muscle. In cardiomyocytes, detyrosinated microtubules are required to resist to contractile compression during contraction: detyrosination promotes association with desmin (DES) at force-generating sarcomeres, leading to buckled microtubules and mechanical resistance to contraction.

The protein localises to the cytoplasm. The protein resides in the cytoskeleton. The enzyme catalyses GTP + H2O = GDP + phosphate + H(+). Its function is as follows. Tubulin is the major constituent of microtubules, a cylinder consisting of laterally associated linear protofilaments composed of alpha- and beta-tubulin heterodimers. Microtubules grow by the addition of GTP-tubulin dimers to the microtubule end, where a stabilizing cap forms. Below the cap, tubulin dimers are in GDP-bound state, owing to GTPase activity of alpha-tubulin. This chain is Tubulin alpha-3E chain (TUBA3E), found in Homo sapiens (Human).